Here is a 95-residue protein sequence, read N- to C-terminus: Large ribosomal subunit protein uL23 (95 aa).

It belongs to the universal ribosomal protein uL23 family. As to quaternary structure, part of the 50S ribosomal subunit. Contacts protein L29, and trigger factor when it is bound to the ribosome.

Its function is as follows. One of the early assembly proteins it binds 23S rRNA. One of the proteins that surrounds the polypeptide exit tunnel on the outside of the ribosome. Forms the main docking site for trigger factor binding to the ribosome. The chain is Large ribosomal subunit protein uL23 from Desulforapulum autotrophicum (strain ATCC 43914 / DSM 3382 / VKM B-1955 / HRM2) (Desulfobacterium autotrophicum).